Consider the following 816-residue polypeptide: Probable disease resistance protein At4g33300 (816 aa).

Positions 1–149 constitute an RPW8 domain; it reads MAITDFFAGE…SLDRVIQQVG (149 aa). Residues 95 to 111 adopt a coiled-coil conformation; that stretch reads TLARKMEKLEKTISNFL. Residues 191-443 form the NB-ARC domain; the sequence is VKKMMFESQG…LDVLINIWIE (253 aa). 207 to 214 serves as a coordination point for ATP; it reads GMGGVGKT. Residues 399 to 415 adopt a coiled-coil conformation; sequence SRLLRQMEASLDNLDQT. 4 LRR repeats span residues 681–704, 705–727, 729–751, and 753–774; these read SLSC…SKLQ, ALEI…ICEL, GLKY…IGKL, and KLEK…AVSL.

Belongs to the disease resistance NB-LRR family.

Probable disease resistance protein. In Arabidopsis thaliana (Mouse-ear cress), this protein is Probable disease resistance protein At4g33300.